A 304-amino-acid chain; its full sequence is Putative integrase/recombinase HI_1414 (304 aa).

The Core-binding (CB) domain maps to 30-109; that stretch reads TLFSDVIKRY…TIGHIFKIAL (80 aa). The Tyr recombinase domain occupies 131-304; that stretch reads PRTQRVTEEN…DMAEVAELLD (174 aa). Residues Arg-174, Lys-199, His-256, Arg-259, and His-281 contribute to the active site. Tyr-291 (O-(3'-phospho-DNA)-tyrosine intermediate) is an active-site residue.

The protein belongs to the 'phage' integrase family.

This Haemophilus influenzae (strain ATCC 51907 / DSM 11121 / KW20 / Rd) protein is Putative integrase/recombinase HI_1414.